The following is a 431-amino-acid chain: Enolase (431 aa).

Q166 is a (2R)-2-phosphoglycerate binding site. The Proton donor role is filled by E208. Mg(2+)-binding residues include D245, E288, and D315. Residues K340, R369, S370, and K391 each contribute to the (2R)-2-phosphoglycerate site. Catalysis depends on K340, which acts as the Proton acceptor.

It belongs to the enolase family. It depends on Mg(2+) as a cofactor.

It is found in the cytoplasm. Its subcellular location is the secreted. The protein resides in the cell surface. The catalysed reaction is (2R)-2-phosphoglycerate = phosphoenolpyruvate + H2O. It participates in carbohydrate degradation; glycolysis; pyruvate from D-glyceraldehyde 3-phosphate: step 4/5. Its function is as follows. Catalyzes the reversible conversion of 2-phosphoglycerate (2-PG) into phosphoenolpyruvate (PEP). It is essential for the degradation of carbohydrates via glycolysis. The polypeptide is Enolase (Clostridium perfringens (strain ATCC 13124 / DSM 756 / JCM 1290 / NCIMB 6125 / NCTC 8237 / Type A)).